The sequence spans 195 residues: Imidazole glycerol phosphate synthase subunit HisH (195 aa).

The 193-residue stretch at 1-193 (MIAIVDYGVG…RETTCNSTQQ (193 aa)) folds into the Glutamine amidotransferase type-1 domain. The active-site Nucleophile is the Cys78. Catalysis depends on residues His168 and Glu170.

As to quaternary structure, heterodimer of HisH and HisF.

Its subcellular location is the cytoplasm. The enzyme catalyses 5-[(5-phospho-1-deoxy-D-ribulos-1-ylimino)methylamino]-1-(5-phospho-beta-D-ribosyl)imidazole-4-carboxamide + L-glutamine = D-erythro-1-(imidazol-4-yl)glycerol 3-phosphate + 5-amino-1-(5-phospho-beta-D-ribosyl)imidazole-4-carboxamide + L-glutamate + H(+). The catalysed reaction is L-glutamine + H2O = L-glutamate + NH4(+). It participates in amino-acid biosynthesis; L-histidine biosynthesis; L-histidine from 5-phospho-alpha-D-ribose 1-diphosphate: step 5/9. In terms of biological role, IGPS catalyzes the conversion of PRFAR and glutamine to IGP, AICAR and glutamate. The HisH subunit catalyzes the hydrolysis of glutamine to glutamate and ammonia as part of the synthesis of IGP and AICAR. The resulting ammonia molecule is channeled to the active site of HisF. This chain is Imidazole glycerol phosphate synthase subunit HisH, found in Exiguobacterium sibiricum (strain DSM 17290 / CCUG 55495 / CIP 109462 / JCM 13490 / 255-15).